Reading from the N-terminus, the 425-residue chain is Glucan 1,3-beta-glucosidase (425 aa).

The signal sequence occupies residues 1–19 (MNLTLLLLALIFSPSLIFS). The active-site Proton donor is the glutamate 219. Intrachain disulfides connect cysteine 301-cysteine 423 and cysteine 326-cysteine 352. The Nucleophile role is filled by glutamate 318.

Belongs to the glycosyl hydrolase 5 (cellulase A) family.

It is found in the secreted. It carries out the reaction Successive hydrolysis of beta-D-glucose units from the non-reducing ends of (1-&gt;3)-beta-D-glucans, releasing alpha-glucose.. Its function is as follows. Beta-glucanases participate in the metabolism of beta-glucan, the main structural component of the cell wall. It could also function biosynthetically as a transglycosylase. This Schwanniomyces occidentalis (Yeast) protein is Glucan 1,3-beta-glucosidase.